Here is a 77-residue protein sequence, read N- to C-terminus: Translation initiation factor IF-1, chloroplastic (77 aa).

The S1-like domain occupies 1-71; it reads MKEQKWIHEG…TRGRIIYRLR (71 aa).

This sequence belongs to the IF-1 family. In terms of assembly, component of the 30S ribosomal translation pre-initiation complex which assembles on the 30S ribosome in the order IF-2 and IF-3, IF-1 and N-formylmethionyl-tRNA(fMet); mRNA recruitment can occur at any time during PIC assembly.

Its subcellular location is the plastid. The protein resides in the chloroplast. One of the essential components for the initiation of protein synthesis. Stabilizes the binding of IF-2 and IF-3 on the 30S subunit to which N-formylmethionyl-tRNA(fMet) subsequently binds. Helps modulate mRNA selection, yielding the 30S pre-initiation complex (PIC). Upon addition of the 50S ribosomal subunit IF-1, IF-2 and IF-3 are released leaving the mature 70S translation initiation complex. The sequence is that of Translation initiation factor IF-1, chloroplastic from Nandina domestica (Heavenly bamboo).